A 380-amino-acid chain; its full sequence is GDP-mannose:cellobiosyl-diphosphopolyprenol alpha-mannosyltransferase (380 aa).

Belongs to the glycosyltransferase group 1 family. Glycosyltransferase 4 subfamily.

It carries out the reaction beta-D-Glc-(1-&gt;4)-alpha-D-Glc-di-trans,octa-cis-undecaprenyl diphosphate + GDP-alpha-D-mannose = alpha-D-Man-(1-&gt;3)-beta-D-Glc-(1-&gt;4)-alpha-D-Glc-1-di-trans,octa-cis-undecaprenyl diphosphate + GDP + H(+). Involved in the biosynthesis of the exopolysaccharide xanthan, a polymer that is comprised of repeating pentasaccharide units with the structure of a beta-(1,4)-linked D-glucose backbone with trisaccharide side chains composed of mannose-beta-(1,4)-glucuronic acid-beta-(1,2)-mannose attached to alternate glucose residues in the backbone by alpha-(1,3) linkages. Xanthan is involved in pathogenicity but has also been used in a variety of applications as a specialty polymer for commercial applications, including food additives, where they act as viscosifying, stabilizing, emulsifying, or gelling agents. This chain is GDP-mannose:cellobiosyl-diphosphopolyprenol alpha-mannosyltransferase (gumH), found in Xanthomonas oryzae pv. oryzae (strain PXO99A).